A 366-amino-acid chain; its full sequence is Ferredoxin--NADP reductase, leaf isozyme 2, chloroplastic (366 aa).

Residues 1-48 constitute a chloroplast transit peptide; the sequence is MAAVNTVSSLPCSKAGAAVAGGAPRPSTCSVFYPPRCWSKRSSGNGVR. The FAD-binding FR-type domain maps to 87 to 209; sequence KEPYTGRCLL…TGPVGKEMLM (123 aa). Residues 145-148, 166-168, tyrosine 172, and 183-185 each bind FAD; these read RLYS, CVK, and VCS. Serine 148 and lysine 168 together coordinate NADP(+). Cysteine 184 and cysteine 189 are joined by a disulfide. Phosphoserine is present on serine 185. Threonine 216 bears the Phosphothreonine mark. Threonine 224 contacts FAD. NADP(+) contacts are provided by residues threonine 224, 256 to 257, 286 to 287, lysine 296, 325 to 326, and glutamate 364; these read VP, SR, and GL.

This sequence belongs to the ferredoxin--NADP reductase type 1 family. As to quaternary structure, heterodimer with LFNR1. Component of high molecular weight thylakoid LFNRs-containing protein complexes containing LIR1, LFNR1, LFNR2, TIC62 and TROL proteins. Interacts directly with LFNR1 and LFNR2; LIR1 increases the affinity of LFNR1 and LFNR2 for TIC62 and subsequent thylakoid relocalization. Requires FAD as cofactor. In terms of processing, may form interchain disulfide bonds with LIR1.

It is found in the plastid. It localises to the chloroplast stroma. Its subcellular location is the chloroplast thylakoid membrane. It catalyses the reaction 2 reduced [2Fe-2S]-[ferredoxin] + NADP(+) + H(+) = 2 oxidized [2Fe-2S]-[ferredoxin] + NADPH. Its pathway is energy metabolism; photosynthesis. Plays a key role in regulating the relative amounts of cyclic and non-cyclic electron flow to meet the demands of the plant for ATP and reducing power. In Oryza sativa subsp. indica (Rice), this protein is Ferredoxin--NADP reductase, leaf isozyme 2, chloroplastic.